Reading from the N-terminus, the 406-residue chain is Argininosuccinate synthase (406 aa).

Residue 8–16 participates in ATP binding; that stretch reads AYSGGLDTS. Tyrosine 86 is a binding site for L-citrulline. An ATP-binding site is contributed by glycine 116. Residues threonine 118, asparagine 122, and aspartate 123 each coordinate L-aspartate. Residue asparagine 122 participates in L-citrulline binding. Arginine 126, serine 174, serine 183, glutamate 259, and tyrosine 271 together coordinate L-citrulline.

Belongs to the argininosuccinate synthase family. Type 1 subfamily. Homotetramer.

Its subcellular location is the cytoplasm. It carries out the reaction L-citrulline + L-aspartate + ATP = 2-(N(omega)-L-arginino)succinate + AMP + diphosphate + H(+). It functions in the pathway amino-acid biosynthesis; L-arginine biosynthesis; L-arginine from L-ornithine and carbamoyl phosphate: step 2/3. The polypeptide is Argininosuccinate synthase (Dehalococcoides mccartyi (strain ATCC BAA-2266 / KCTC 15142 / 195) (Dehalococcoides ethenogenes (strain 195))).